Here is a 631-residue protein sequence, read N- to C-terminus: Chaperone protein HtpG (631 aa).

The segment at 1 to 342 (MSEQTANKET…SNDLPLNVSR (342 aa)) is a; substrate-binding. The tract at residues 343-559 (EILQDNKVTQ…DFEMGTQMAK (217 aa)) is b. The segment at 560 to 631 (LLEAAGQAAP…LSAMNQLLAK (72 aa)) is c.

It belongs to the heat shock protein 90 family. Homodimer.

It is found in the cytoplasm. In terms of biological role, molecular chaperone. Has ATPase activity. This is Chaperone protein HtpG from Aliivibrio fischeri (strain ATCC 700601 / ES114) (Vibrio fischeri).